The primary structure comprises 159 residues: S-ribosylhomocysteine lyase (159 aa).

Fe cation contacts are provided by His53, His57, and Cys124.

The protein belongs to the LuxS family. In terms of assembly, homodimer. Requires Fe cation as cofactor.

The enzyme catalyses S-(5-deoxy-D-ribos-5-yl)-L-homocysteine = (S)-4,5-dihydroxypentane-2,3-dione + L-homocysteine. Involved in the synthesis of autoinducer 2 (AI-2) which is secreted by bacteria and is used to communicate both the cell density and the metabolic potential of the environment. The regulation of gene expression in response to changes in cell density is called quorum sensing. Catalyzes the transformation of S-ribosylhomocysteine (RHC) to homocysteine (HC) and 4,5-dihydroxy-2,3-pentadione (DPD). This Clostridium beijerinckii (strain ATCC 51743 / NCIMB 8052) (Clostridium acetobutylicum) protein is S-ribosylhomocysteine lyase.